The sequence spans 94 residues: Pyrimidine/purine nucleoside phosphorylase (94 aa).

Belongs to the nucleoside phosphorylase PpnP family.

It catalyses the reaction a purine D-ribonucleoside + phosphate = a purine nucleobase + alpha-D-ribose 1-phosphate. The catalysed reaction is adenosine + phosphate = alpha-D-ribose 1-phosphate + adenine. It carries out the reaction cytidine + phosphate = cytosine + alpha-D-ribose 1-phosphate. The enzyme catalyses guanosine + phosphate = alpha-D-ribose 1-phosphate + guanine. It catalyses the reaction inosine + phosphate = alpha-D-ribose 1-phosphate + hypoxanthine. The catalysed reaction is thymidine + phosphate = 2-deoxy-alpha-D-ribose 1-phosphate + thymine. It carries out the reaction uridine + phosphate = alpha-D-ribose 1-phosphate + uracil. The enzyme catalyses xanthosine + phosphate = alpha-D-ribose 1-phosphate + xanthine. Functionally, catalyzes the phosphorolysis of diverse nucleosides, yielding D-ribose 1-phosphate and the respective free bases. Can use uridine, adenosine, guanosine, cytidine, thymidine, inosine and xanthosine as substrates. Also catalyzes the reverse reactions. This chain is Pyrimidine/purine nucleoside phosphorylase, found in Shigella dysenteriae serotype 1 (strain Sd197).